The chain runs to 366 residues: tRNA-specific 2-thiouridylase MnmA (366 aa).

ATP-binding positions include 6–13 and methionine 32; that span reads GLSGGVDS. The Nucleophile role is filled by cysteine 96. A disulfide bridge links cysteine 96 with cysteine 196. Glycine 120 contacts ATP. An interaction with tRNA region spans residues 146 to 148; it reads KDQ. Cysteine 196 functions as the Cysteine persulfide intermediate in the catalytic mechanism. Residues 302 to 303 are interaction with tRNA; that stretch reads RY.

The protein belongs to the MnmA/TRMU family.

Its subcellular location is the cytoplasm. It carries out the reaction S-sulfanyl-L-cysteinyl-[protein] + uridine(34) in tRNA + AH2 + ATP = 2-thiouridine(34) in tRNA + L-cysteinyl-[protein] + A + AMP + diphosphate + H(+). In terms of biological role, catalyzes the 2-thiolation of uridine at the wobble position (U34) of tRNA, leading to the formation of s(2)U34. The polypeptide is tRNA-specific 2-thiouridylase MnmA (Treponema denticola (strain ATCC 35405 / DSM 14222 / CIP 103919 / JCM 8153 / KCTC 15104)).